A 178-amino-acid chain; its full sequence is Large ribosomal subunit protein uL6 (178 aa).

Residues 159 to 178 form a disordered region; sequence GKGIRYEGEHVRRKEGKTGK.

It belongs to the universal ribosomal protein uL6 family. Part of the 50S ribosomal subunit.

In terms of biological role, this protein binds to the 23S rRNA, and is important in its secondary structure. It is located near the subunit interface in the base of the L7/L12 stalk, and near the tRNA binding site of the peptidyltransferase center. The polypeptide is Large ribosomal subunit protein uL6 (Listeria monocytogenes serotype 4b (strain CLIP80459)).